The chain runs to 556 residues: Arginine--tRNA ligase (556 aa).

The short motif at 133 to 143 is the 'HIGH' region element; that stretch reads ANPTGPIHIGH.

The protein belongs to the class-I aminoacyl-tRNA synthetase family. Monomer.

Its subcellular location is the cytoplasm. The catalysed reaction is tRNA(Arg) + L-arginine + ATP = L-arginyl-tRNA(Arg) + AMP + diphosphate. The polypeptide is Arginine--tRNA ligase (Dehalococcoides mccartyi (strain ATCC BAA-2100 / JCM 16839 / KCTC 5957 / BAV1)).